A 402-amino-acid polypeptide reads, in one-letter code: Guanine nucleotide-binding protein subunit alpha-1 (402 aa).

Polar residues predominate over residues 1-12; that stretch reads MGCSASKPSEPS. The interval 1 to 70 is disordered; it reads MGCSASKPSE…PEPQKPAEPA (70 aa). Glycine 2 is lipidated: N-myristoyl glycine. Residue cysteine 3 is the site of S-palmitoyl cysteine attachment. Over residues 23–33 the composition is skewed to basic and acidic residues; the sequence is KKVEQVPEPKP. Residues 34–69 are compositionally biased toward pro residues; it reads EPQPQPEPQPQPEPPKPAEPAPAPAPAPEPQKPAEP. One can recognise a G-alpha domain in the interval 82 to 402; that stretch reads EAYGLLLCGA…FISDKYYQDA (321 aa). The G1 motif stretch occupies residues 85 to 98; that stretch reads GLLLCGAGESGKTT. 14 residues coordinate GTP: glutamate 93, serine 94, glycine 95, lysine 96, threonine 97, threonine 98, aspartate 198, leucine 223, serine 229, glycine 251, asparagine 317, lysine 318, aspartate 320, and alanine 377. Threonine 97 lines the Mg(2+) pocket. The tract at residues 221 to 229 is G2 motif; that stretch reads DVLRARIRS. Residue serine 229 participates in Mg(2+) binding. The segment at 244–253 is G3 motif; that stretch reads IRIFDVGGQK. Positions 313–320 are G4 motif; it reads FLVCNKFD. The G5 motif stretch occupies residues 375–380; it reads IVALNG.

It belongs to the G-alpha family. As to quaternary structure, g proteins are composed of 3 units; alpha, beta and gamma. The alpha chain contains the guanine nucleotide binding site. Mg(2+) serves as cofactor.

Its subcellular location is the cytoplasm. It localises to the perinuclear region. It is found in the endomembrane system. Its function is as follows. Guanine nucleotide-binding proteins (G proteins) are involved as modulators or transducers in various transmembrane signaling systems. The chain is Guanine nucleotide-binding protein subunit alpha-1 (GA1) from Trichomonas vaginalis.